The primary structure comprises 216 residues: MSFLFGSRSSKTFKPKKNIPEGSHQYELLKHAEATLGSGNLRMAVMLPEGEDLNEWVAVNTVDFFNQINMLYGTITDFCTEESCPVMSAGPKYEYHWADGTNIKKPIKCSAPKYIDYLMTWVQDQLDDETLFPSKIGVPFPKNFMSVAKTILKRLFRVYAHIYHQHFDPVIQLQEEAHLNTSFKHFIFFVQEFNLIDRRELAPLQELIEKLTSKDR.

An N-acetylserine modification is found at Ser2. 2 positions are modified to phosphothreonine; by STK4/MST1: Thr12 and Thr35. Residues Cys79, Cys84, His161, and His166 each coordinate Zn(2+).

Belongs to the MOB1/phocein family. Binds STK38L. Interacts with LATS1 and LATS2. Phosphorylated by STK3/MST2 and STK4/MST1 and this phosphorylation enhances its binding to LATS1. As to expression, adrenal gland, bone marrow, brain, lung, placenta, prostate, salivary gland, skeletal muscle, testis, thymus, thyroid gland, uterus, colon with mucosa, fetal brain and fetal liver.

Its subcellular location is the cytoplasm. The protein localises to the nucleus. Activator of LATS1/2 in the Hippo signaling pathway which plays a pivotal role in organ size control and tumor suppression by restricting proliferation and promoting apoptosis. The core of this pathway is composed of a kinase cascade wherein STK3/MST2 and STK4/MST1, in complex with its regulatory protein SAV1, phosphorylates and activates LATS1/2 in complex with its regulatory protein MOB1, which in turn phosphorylates and inactivates YAP1 oncoprotein and WWTR1/TAZ. Phosphorylation of YAP1 by LATS1/2 inhibits its translocation into the nucleus to regulate cellular genes important for cell proliferation, cell death, and cell migration. Stimulates the kinase activity of STK38L. This Homo sapiens (Human) protein is MOB kinase activator 1B.